We begin with the raw amino-acid sequence, 398 residues long: Alpha-2,8-sialyltransferase 8F (398 aa).

Topologically, residues 1 to 3 (MRP) are cytoplasmic. A helical; Signal-anchor for type II membrane protein transmembrane segment spans residues 4 to 24 (GGALLALLASLLLLLLLRLLW). At 25–398 (CPADAPGRAR…KLQFSKCEVA (374 aa)) the chain is on the lumenal side. Residues N66, N93, N151, and N196 are each glycosylated (N-linked (GlcNAc...) asparagine). 2 disulfides stabilise this stretch: C186/C335 and C200/C395. Substrate is bound by residues N214, 236–238 (NPS), and 322–324 (STG). The active-site Proton donor/acceptor is H370.

Belongs to the glycosyltransferase 29 family.

It localises to the golgi apparatus membrane. It catalyses the reaction a ganglioside GM3 + CMP-N-acetyl-beta-neuraminate = a ganglioside GD3 + CMP + H(+). The catalysed reaction is a ganglioside GM3 (d18:1(4E)) + CMP-N-acetyl-beta-neuraminate = a ganglioside GD3 (d18:1(4E)) + CMP + H(+). It carries out the reaction a ganglioside GD1a (d18:1(4E)) + CMP-N-acetyl-beta-neuraminate = a ganglioside GT1a (d18:1(4E)) + CMP + H(+). The enzyme catalyses a ganglioside GD1a + CMP-N-acetyl-beta-neuraminate = a ganglioside GT1a + CMP + H(+). It catalyses the reaction a ganglioside GM1b (d18:1(4E)) + CMP-N-acetyl-beta-neuraminate = a ganglioside GD1c (d18:1(4E)) + CMP + H(+). The catalysed reaction is a ganglioside GM1b + CMP-N-acetyl-beta-neuraminate = a ganglioside GD1c + CMP + H(+). It carries out the reaction a ganglioside GM4 (d18:1(4E)) + CMP-N-acetyl-beta-neuraminate = an N-acetyl-alpha-neuraminosyl-(2-&gt;8)-N-acetyl-alpha-neuraminosyl-(2-&gt;3)-beta-D-galactosyl-(1&lt;-&gt;1')-N-acylsphing-4-enine + CMP + H(+). The enzyme catalyses N-acetyl-alpha-neuraminosyl-(2-&gt;3)-beta-D-galactosyl-(1&lt;-&gt;1')-ceramide + CMP-N-acetyl-beta-neuraminate = N-acetyl-alpha-neuraminosyl-(2-&gt;8)-N-acetyl-alpha-neuraminosyl-(2-&gt;3)-beta-D-galactosyl-(1&lt;-&gt;1')-ceramide + CMP + H(+). It catalyses the reaction a ganglioside GT1b (d18:1(4E)) + CMP-N-acetyl-beta-neuraminate = a ganglioside GQ1b (d18:1(4E)) + CMP + H(+). The catalysed reaction is a ganglioside GT1b + CMP-N-acetyl-beta-neuraminate = a ganglioside GQ1b + CMP + H(+). It participates in protein modification; protein glycosylation. Its function is as follows. Alpha-2,8-sialyltransferase that prefers O-glycans to N-glycans or glycolipids as acceptor substrates. The minimal acceptor substrate is the NeuAc-alpha-2,3(6)-Gal sequence at the non-reducing end of their carbohydrate groups. In Homo sapiens (Human), this protein is Alpha-2,8-sialyltransferase 8F.